We begin with the raw amino-acid sequence, 561 residues long: uncharacterized protein (561 aa).

The segment covering 314 to 323 has biased composition (low complexity); it reads ANNGSGDSSS. The segment at 314 to 366 is disordered; sequence ANNGSGDSSSTALNNESPNTTPKSRTFFSPKGHRRNSSHVSSLTSRSTKKPIT. Residues 324-340 are compositionally biased toward polar residues; sequence TALNNESPNTTPKSRTF. At serine 514 the chain carries Phosphoserine.

It localises to the cytoplasm. This is an uncharacterized protein from Saccharomyces cerevisiae (strain ATCC 204508 / S288c) (Baker's yeast).